The primary structure comprises 506 residues: Maturase K (506 aa).

The protein belongs to the intron maturase 2 family. MatK subfamily.

Its subcellular location is the plastid. The protein localises to the chloroplast. In terms of biological role, usually encoded in the trnK tRNA gene intron. Probably assists in splicing its own and other chloroplast group II introns. In Calluna vulgaris (Heather), this protein is Maturase K.